The chain runs to 446 residues: Peroxisomal biogenesis factor 3 (446 aa).

The Peroxisomal segment spans residues 1-12 (MARTGLQRHRGK). The chain crosses the membrane as a helical span at residues 13-33 (LLGTGAVLGGLVVAGVVAAVA). Over 34 to 446 (AKRWVRRQQQ…SASVYSNFGV (413 aa)) the chain is Cytoplasmic. A disordered region spans residues 101 to 122 (RAGEDDEQGSGGHASAGEGSVS).

Belongs to the peroxin-3 family.

The protein localises to the peroxisome membrane. Involved in peroxisome biosynthesis. This is Peroxisomal biogenesis factor 3 (PEX3) from Eremothecium gossypii (strain ATCC 10895 / CBS 109.51 / FGSC 9923 / NRRL Y-1056) (Yeast).